Reading from the N-terminus, the 447-residue chain is N-succinylarginine dihydrolase (447 aa).

Residues 19-28 (AGLSFGNEAS), Asn110, and 137-138 (HR) each bind substrate. Glu174 is an active-site residue. Substrate is bound at residue Arg212. The active site involves His248. Asp250 and Asn359 together coordinate substrate. Cys365 acts as the Nucleophile in catalysis.

This sequence belongs to the succinylarginine dihydrolase family. Homodimer.

The enzyme catalyses N(2)-succinyl-L-arginine + 2 H2O + 2 H(+) = N(2)-succinyl-L-ornithine + 2 NH4(+) + CO2. The protein operates within amino-acid degradation; L-arginine degradation via AST pathway; L-glutamate and succinate from L-arginine: step 2/5. In terms of biological role, catalyzes the hydrolysis of N(2)-succinylarginine into N(2)-succinylornithine, ammonia and CO(2). The protein is N-succinylarginine dihydrolase of Salmonella typhimurium (strain LT2 / SGSC1412 / ATCC 700720).